The chain runs to 231 residues: MKRAVVVFSGGQDSTTCLAQARHQYDEVHCVTFDYGQRHRAEIDVARALALKLGTRAHKVLDVTLLNELAVSSLTRDSIPVPDYEPNADGIPNTFVPGRNILFLTLAAIYAYQVKAEAVITGVCETDFSGYPDCRDEFVKALNHAVNLGMAKDIRFETPLMWIDKAETWALADYWGQLDLVREETLTCYNGIKGDGCGHCAACNLRANGLNHYLSNKAAVMAAMKQKTGLR.

8–18 serves as a coordination point for ATP; it reads FSGGQDSTTCL. Residues cysteine 188, cysteine 197, cysteine 200, and cysteine 203 each contribute to the Zn(2+) site.

The protein belongs to the QueC family. Requires Zn(2+) as cofactor.

The enzyme catalyses 7-carboxy-7-deazaguanine + NH4(+) + ATP = 7-cyano-7-deazaguanine + ADP + phosphate + H2O + H(+). It functions in the pathway purine metabolism; 7-cyano-7-deazaguanine biosynthesis. In terms of biological role, catalyzes the ATP-dependent conversion of 7-carboxy-7-deazaguanine (CDG) to 7-cyano-7-deazaguanine (preQ(0)). In Salmonella gallinarum (strain 287/91 / NCTC 13346), this protein is 7-cyano-7-deazaguanine synthase.